A 443-amino-acid chain; its full sequence is ATP-dependent protease ATPase subunit HslU (443 aa).

Residues isoleucine 18, glycine 60 to glutamate 65, aspartate 256, glutamate 321, and arginine 393 each bind ATP.

It belongs to the ClpX chaperone family. HslU subfamily. As to quaternary structure, a double ring-shaped homohexamer of HslV is capped on each side by a ring-shaped HslU homohexamer. The assembly of the HslU/HslV complex is dependent on binding of ATP.

It is found in the cytoplasm. Functionally, ATPase subunit of a proteasome-like degradation complex; this subunit has chaperone activity. The binding of ATP and its subsequent hydrolysis by HslU are essential for unfolding of protein substrates subsequently hydrolyzed by HslV. HslU recognizes the N-terminal part of its protein substrates and unfolds these before they are guided to HslV for hydrolysis. The polypeptide is ATP-dependent protease ATPase subunit HslU (Edwardsiella ictaluri (strain 93-146)).